A 329-amino-acid polypeptide reads, in one-letter code: GTP 3',8-cyclase (329 aa).

In terms of domain architecture, Radical SAM core spans 8-234; the sequence is AFARKFYYLR…QIRQRSDGPA (227 aa). Arg-17 is a binding site for GTP. Cys-24 and Cys-28 together coordinate [4Fe-4S] cluster. Residue Tyr-30 participates in S-adenosyl-L-methionine binding. Cys-31 contributes to the [4Fe-4S] cluster binding site. Arg-68 contributes to the GTP binding site. Gly-72 is an S-adenosyl-L-methionine binding site. Position 99 (Thr-99) interacts with GTP. Ser-123 contacts S-adenosyl-L-methionine. Lys-160 contacts GTP. An S-adenosyl-L-methionine-binding site is contributed by Met-194. Residues Cys-257 and Cys-260 each contribute to the [4Fe-4S] cluster site. Residue 262-264 participates in GTP binding; it reads RLR. Position 274 (Cys-274) interacts with [4Fe-4S] cluster.

This sequence belongs to the radical SAM superfamily. MoaA family. Monomer and homodimer. [4Fe-4S] cluster serves as cofactor.

The catalysed reaction is GTP + AH2 + S-adenosyl-L-methionine = (8S)-3',8-cyclo-7,8-dihydroguanosine 5'-triphosphate + 5'-deoxyadenosine + L-methionine + A + H(+). It functions in the pathway cofactor biosynthesis; molybdopterin biosynthesis. Its function is as follows. Catalyzes the cyclization of GTP to (8S)-3',8-cyclo-7,8-dihydroguanosine 5'-triphosphate. The polypeptide is GTP 3',8-cyclase (Klebsiella pneumoniae subsp. pneumoniae (strain ATCC 700721 / MGH 78578)).